Consider the following 138-residue polypeptide: MSTIHVDVVSATESLYSGEVLCVFAPASTGELGIYPKHTALLSILKPGEVRIETDKGIESIYVSGGIVEVQPDVVTIFSDTAIRANDLDEFKVLEAKQRAQDEMDNSIDTQDISATQAALSESMAQLQMINKMRGKKC.

It belongs to the ATPase epsilon chain family. F-type ATPases have 2 components, CF(1) - the catalytic core - and CF(0) - the membrane proton channel. CF(1) has five subunits: alpha(3), beta(3), gamma(1), delta(1), epsilon(1). CF(0) has three main subunits: a, b and c.

It is found in the cell inner membrane. In terms of biological role, produces ATP from ADP in the presence of a proton gradient across the membrane. The protein is ATP synthase epsilon chain of Vesicomyosocius okutanii subsp. Calyptogena okutanii (strain HA).